Consider the following 225-residue polypeptide: Peptidyl-tRNA hydrolase (225 aa).

A tRNA-binding site is contributed by tyrosine 14. Histidine 19 acts as the Proton acceptor in catalysis. The tRNA site is built by phenylalanine 64, asparagine 66, and asparagine 112. A disordered region spans residues 187 to 225 (MQPPKPEKPKGEAKPAAPEAPEAAPDTRSALQRLADRFR). Over residues 200–210 (KPAAPEAPEAA) the composition is skewed to low complexity.

It belongs to the PTH family. In terms of assembly, monomer.

The protein resides in the cytoplasm. It carries out the reaction an N-acyl-L-alpha-aminoacyl-tRNA + H2O = an N-acyl-L-amino acid + a tRNA + H(+). Its function is as follows. Hydrolyzes ribosome-free peptidyl-tRNAs (with 1 or more amino acids incorporated), which drop off the ribosome during protein synthesis, or as a result of ribosome stalling. In terms of biological role, catalyzes the release of premature peptidyl moieties from peptidyl-tRNA molecules trapped in stalled 50S ribosomal subunits, and thus maintains levels of free tRNAs and 50S ribosomes. This chain is Peptidyl-tRNA hydrolase, found in Cereibacter sphaeroides (strain ATCC 17025 / ATH 2.4.3) (Rhodobacter sphaeroides).